A 249-amino-acid chain; its full sequence is Protein YIPF4 (249 aa).

Residues 1 to 15 (MQPPGPQQPPPPPLF) show a composition bias toward pro residues. Residues 1–40 (MQPPGPQQPPPPPLFTPNNGDFTFVSSADAEDPSGSITTP) form a disordered region. Topologically, residues 1–116 (MQPPGPQQPP…LGFNRQVVRD (116 aa)) are cytoplasmic. Positions 16–26 (TPNNGDFTFVS) are enriched in polar residues. Residues 117–137 (NPDFWGPLAVVLFFSMISLYG) form a helical membrane-spanning segment. A topological domain (lumenal) is located at residue Q138. Residues 139–159 (FKVVSWIITIWIFGSLTIFLL) traverse the membrane as a helical segment. At 160-171 (ARVLGGEVAYGQ) the chain is on the cytoplasmic side. A helical membrane pass occupies residues 172-192 (VLGVIGYSLLPLIVIAPVLLV). Over 193–200 (VGSFEVVS) the chain is Lumenal. Residues 201-221 (TLIKLFGVFWAAYSAASLLVG) form a helical membrane-spanning segment. Residues 222-228 (EEFKTKK) lie on the Cytoplasmic side of the membrane. A helical membrane pass occupies residues 229–249 (PLLIYPIFLLYIYFLSLYTGV).

Belongs to the YIP1 family.

The protein resides in the golgi apparatus. It localises to the cis-Golgi network membrane. Involved in the maintenance of the Golgi structure. The chain is Protein YIPF4 (YIPF4) from Gallus gallus (Chicken).